Reading from the N-terminus, the 523-residue chain is MKNMSQRSMDVEKKAANADSCSVSTSSINVDDADVALRFLKQNGLDESSTANEDDVVAGEEANFYGSHELSPKVLRKVDLFILPFLCCTYLLMFLDKALLNYAASMGIKDHLKGNEFSNLGTIFSAAYIFMEPVVTYLIQKFPISKILGTFITVWGIVLACHAACKTYASLMVVRTLLGLFESSSAVGCIAISGMYYTKSEQSARIGFWATQAGTGYIVGGLISFGFLHYHGTAFTSWQIMFLVVGLVTVAFGVLTFLYLPDNVTNAWFLNKEEKIQVVEHIRANQTGLETKKFKKQQVKELFLHDKFTWPMLLLTACSQISTGAIGTFSVTITGTFGFDKYETALLQLPIGAITAMIILITTQMLSRWGHITLITTSMYIPAIIGCIVLISLPLSHKIGNLFSLYLLYSGSCVITNIYIWNSCNTSGYTKRVFRNAITMIVYNVSCIIAPQMFRAYSAPRYIPAKIALLVTQCVCVPLQLYIGYICKKENEKRDKEQEGQERKKYQFLDLTDIENRNFRYIY.

Residues 1-79 are Cytoplasmic-facing; sequence MKNMSQRSMD…LSPKVLRKVD (79 aa). The helical transmembrane segment at 80–100 threads the bilayer; sequence LFILPFLCCTYLLMFLDKALL. At 101–118 the chain is on the extracellular side; the sequence is NYAASMGIKDHLKGNEFS. Residues 119–139 form a helical membrane-spanning segment; it reads NLGTIFSAAYIFMEPVVTYLI. The Cytoplasmic portion of the chain corresponds to 140–141; sequence QK. The chain crosses the membrane as a helical span at residues 142 to 162; it reads FPISKILGTFITVWGIVLACH. Topologically, residues 163–176 are extracellular; the sequence is AACKTYASLMVVRT. The chain crosses the membrane as a helical span at residues 177–197; sequence LLGLFESSSAVGCIAISGMYY. Topologically, residues 198–207 are cytoplasmic; that stretch reads TKSEQSARIG. A helical membrane pass occupies residues 208 to 228; it reads FWATQAGTGYIVGGLISFGFL. The Extracellular segment spans residues 229–239; that stretch reads HYHGTAFTSWQ. A helical membrane pass occupies residues 240–260; it reads IMFLVVGLVTVAFGVLTFLYL. The Cytoplasmic segment spans residues 261 to 312; sequence PDNVTNAWFLNKEEKIQVVEHIRANQTGLETKKFKKQQVKELFLHDKFTWPM. A helical membrane pass occupies residues 313-333; it reads LLLTACSQISTGAIGTFSVTI. Over 334–345 the chain is Extracellular; that stretch reads TGTFGFDKYETA. A helical membrane pass occupies residues 346 to 366; sequence LLQLPIGAITAMIILITTQML. The Cytoplasmic portion of the chain corresponds to 367-371; the sequence is SRWGH. A helical transmembrane segment spans residues 372-392; that stretch reads ITLITTSMYIPAIIGCIVLIS. Residues 393–400 are Extracellular-facing; the sequence is LPLSHKIG. The chain crosses the membrane as a helical span at residues 401-421; that stretch reads NLFSLYLLYSGSCVITNIYIW. Over 422-432 the chain is Cytoplasmic; the sequence is NSCNTSGYTKR. A helical membrane pass occupies residues 433–452; sequence VFRNAITMIVYNVSCIIAPQ. At 453 to 466 the chain is on the extracellular side; sequence MFRAYSAPRYIPAK. A helical membrane pass occupies residues 467–487; sequence IALLVTQCVCVPLQLYIGYIC. Topologically, residues 488 to 523 are cytoplasmic; the sequence is KKENEKRDKEQEGQERKKYQFLDLTDIENRNFRYIY.

This sequence belongs to the major facilitator superfamily. Allantoate permease family.

The protein localises to the endoplasmic reticulum membrane. It is found in the cell membrane. In terms of biological role, transports either thiamine or, rather, a related metabolite involved in the thiamine biosynthesis pathway. This is Thiamine pathway transporter THI73 (THI73) from Saccharomyces cerevisiae (strain ATCC 204508 / S288c) (Baker's yeast).